Here is a 179-residue protein sequence, read N- to C-terminus: Cell division protein SepF (179 aa).

The tract at residues 22–55 is disordered; sequence LPYEKRDEPVFTSVNSSQEPALPMNQPSQSAGTK. Polar residues predominate over residues 33 to 55; it reads TSVNSSQEPALPMNQPSQSAGTK.

This sequence belongs to the SepF family. As to quaternary structure, homodimer. Interacts with FtsZ.

It localises to the cytoplasm. Functionally, cell division protein that is part of the divisome complex and is recruited early to the Z-ring. Probably stimulates Z-ring formation, perhaps through the cross-linking of FtsZ protofilaments. Its function overlaps with FtsA. In Streptococcus pneumoniae (strain Taiwan19F-14), this protein is Cell division protein SepF.